A 181-amino-acid chain; its full sequence is Adenine phosphoribosyltransferase (181 aa).

Belongs to the purine/pyrimidine phosphoribosyltransferase family. In terms of assembly, homodimer.

It localises to the cytoplasm. It carries out the reaction AMP + diphosphate = 5-phospho-alpha-D-ribose 1-diphosphate + adenine. It participates in purine metabolism; AMP biosynthesis via salvage pathway; AMP from adenine: step 1/1. Catalyzes a salvage reaction resulting in the formation of AMP, that is energically less costly than de novo synthesis. This chain is Adenine phosphoribosyltransferase (Aprt), found in Drosophila pseudoobscura pseudoobscura (Fruit fly).